The primary structure comprises 217 residues: Large ribosomal subunit protein bL25 (217 aa).

Residues 195 to 211 are compositionally biased toward low complexity; that stretch reads PAEGAAAAPAKGAAKGA. The disordered stretch occupies residues 195-217; sequence PAEGAAAAPAKGAAKGAAKGGKK.

This sequence belongs to the bacterial ribosomal protein bL25 family. CTC subfamily. As to quaternary structure, part of the 50S ribosomal subunit; part of the 5S rRNA/L5/L18/L25 subcomplex. Contacts the 5S rRNA. Binds to the 5S rRNA independently of L5 and L18.

Its function is as follows. This is one of the proteins that binds to the 5S RNA in the ribosome where it forms part of the central protuberance. The sequence is that of Large ribosomal subunit protein bL25 from Acidiphilium cryptum (strain JF-5).